A 120-amino-acid polypeptide reads, in one-letter code: Small ribosomal subunit protein bS6 (120 aa).

Positions 93-120 (KKADTAPSSMMKTVEREEARKASQTEQA) are disordered. A compositionally biased stretch (basic and acidic residues) spans 105–120 (TVEREEARKASQTEQA).

Belongs to the bacterial ribosomal protein bS6 family.

Functionally, binds together with bS18 to 16S ribosomal RNA. The polypeptide is Small ribosomal subunit protein bS6 (Delftia acidovorans (strain DSM 14801 / SPH-1)).